The sequence spans 1938 residues: Myosin-1 (1938 aa).

In terms of domain architecture, Myosin N-terminal SH3-like spans 33-82 (DAKTSVFVADPKESFVKATVQSREGGKVTAKTEAGATVTVKEDQCFPMNP). Phosphothreonine occurs at positions 64 and 69. Residues 86 to 781 (DKIEDMAMMT…LLGLLEEMRD (696 aa)) form the Myosin motor domain. Residue lysine 130 is modified to N6,N6,N6-trimethyllysine. Residue 179 to 186 (GESGAGKT) participates in ATP binding. Tyrosine 389 is subject to Phosphotyrosine. A Phosphothreonine modification is found at threonine 419. A Phosphotyrosine modification is found at tyrosine 424. Serine 625 is subject to Phosphoserine. Positions 658–680 (LNKLMTNLRSTHPHFVRCIIPNE) are actin-binding. Histidine 756 is subject to Pros-methylhistidine. Positions 760 to 774 (KFGHTKVFFKAGLLG) are actin-binding. In terms of domain architecture, IQ spans 784-813 (LAQIITRTQARCRGFLARVEYQRMVERRES). Positions 842–1938 (LLKSAETEKE…EVHTKIISEE (1097 aa)) form a coiled coil. A phosphoserine mark is found at serine 1091 and serine 1095. 2 disordered regions span residues 1124–1146 (EIEAERASRAKAEKQRSDLSREL) and 1152–1171 (RLEEAGGATSAQIEMNKKRE). Residues 1127 to 1146 (AERASRAKAEKQRSDLSREL) are compositionally biased toward basic and acidic residues. Residues serine 1161 and serine 1236 each carry the phosphoserine modification. Position 1240 is a phosphothreonine (threonine 1240). Serine 1242 carries the post-translational modification Phosphoserine. Threonine 1254 bears the Phosphothreonine mark. Serine 1260 bears the Phosphoserine mark. The residue at position 1285 (threonine 1285) is a Phosphothreonine. 3 positions are modified to phosphoserine: serine 1291, serine 1302, and serine 1305. Tyrosine 1463 carries the phosphotyrosine modification. Threonine 1466 carries the post-translational modification Phosphothreonine. Residue serine 1473 is modified to Phosphoserine. Tyrosine 1491 is modified (phosphotyrosine). Serine 1494 is modified (phosphoserine). Threonine 1500 carries the phosphothreonine modification. A Phosphoserine modification is found at serine 1513. At threonine 1516 the chain carries Phosphothreonine. A phosphoserine mark is found at serine 1541, serine 1553, serine 1573, serine 1713, and serine 1725. 2 positions are modified to phosphothreonine: threonine 1729 and threonine 1735. Serine 1738 bears the Phosphoserine mark.

This sequence belongs to the TRAFAC class myosin-kinesin ATPase superfamily. Myosin family. As to quaternary structure, muscle myosin is a hexameric protein that consists of 2 heavy chain subunits (MHC), 2 alkali light chain subunits (MLC) and 2 regulatory light chain subunits (MLC-2). Interacts with SLC26A5.

It is found in the cytoplasm. Its subcellular location is the myofibril. Required for normal hearing. It plays a role in cochlear amplification of auditory stimuli, likely through the positive regulation of prestin (SLC26A5) activity and outer hair cell (OHC) electromotility. This chain is Myosin-1 (MYH1), found in Equus caballus (Horse).